The following is a 772-amino-acid chain: Potassium transporter 24 (772 aa).

The Cytoplasmic portion of the chain corresponds to 1–23 (MDVEGGGAAARRKGGWWWWREEA). Residues 24-44 (VLAYQSLGVVYGEVAAAPLYV) traverse the membrane as a helical segment. Residues 45-66 (YRSAFAGGDIEHSAGNEEIYGA) are Extracellular-facing. A helical transmembrane segment spans residues 67 to 87 (LSLVFWTLTLVPLAKYVLLVL). Residues 88-150 (RADDAGEGGT…ALERHRVLQR (63 aa)) are Cytoplasmic-facing. The chain crosses the membrane as a helical span at residues 151–171 (LLLLLALLGTCMVIGDGVLTP). Residues 172 to 192 (AVSVFSAVSGLELSMDKDQHK) lie on the Extracellular side of the membrane. A helical membrane pass occupies residues 193–213 (YILLPITCVILVCLFALQHYG). Topologically, residues 214–216 (THR) are cytoplasmic. Residues 217 to 237 (VGFLFAPIVCLWLLCISIIGV) form a helical membrane-spanning segment. Topologically, residues 238-265 (YNIIHWNPHVYQALSPYYMYKFLRKTQT) are extracellular. A helical membrane pass occupies residues 266-286 (GGWMSLGGILLCVTGSEAMYA). Residues 287 to 298 (DLGHFTQNSIKM) lie on the Cytoplasmic side of the membrane. Residues 299–319 (AFTLLVYPALVLAYMGQAAYI) traverse the membrane as a helical segment. At 320–344 (SRHHNFEDGSHIGFYVSVPEKIRWP) the chain is on the extracellular side. Residues 345-365 (VLGIAILASVVGSQAIITGTF) form a helical membrane-spanning segment. The Cytoplasmic segment spans residues 366–392 (SIIKQCSSLNCFPRVKIVHTSSTVHGQ). The helical transmembrane segment at 393–413 (IYIPEINWILMILCLSVTIGF) threads the bilayer. Over 414-423 (RDTKHLTNAQ) the chain is Extracellular. Residues 424 to 444 (GLAVITVMLVTTCLMSLVILL) traverse the membrane as a helical segment. Topologically, residues 445 to 449 (CWNKS) are cytoplasmic. The helical transmembrane segment at 450–470 (IVYALSFLLFFGAIEVIYFAA) threads the bilayer. Residues 471-477 (SLVKFHE) lie on the Extracellular side of the membrane. Residues 478-498 (GAWVPVTLSFIFMMVMCVWHY) form a helical membrane-spanning segment. Over 499–772 (GTKKKYEFDV…TVEVGMICLV (274 aa)) the chain is Cytoplasmic. Residues 656-684 (EEGEFDGSDSTGSSAHKEINPNTTAPKPK) are disordered.

Belongs to the HAK/KUP transporter (TC 2.A.72.3) family.

The protein localises to the membrane. In terms of biological role, high-affinity potassium transporter. The polypeptide is Potassium transporter 24 (HAK24) (Oryza sativa subsp. japonica (Rice)).